Here is a 295-residue protein sequence, read N- to C-terminus: Probable protein phosphatase 2C 5 (295 aa).

The region spanning 23 to 294 (QYAATHMQGW…DNMTCILVLF (272 aa)) is the PPM-type phosphatase domain. Mn(2+) contacts are provided by Asp-57 and Gly-58. The interval 151–170 (NRDGKPFDMSKDHKPDDDQE) is disordered. Residues Asp-237 and Asp-285 each contribute to the Mn(2+) site.

This sequence belongs to the PP2C family. It depends on Mg(2+) as a cofactor. Mn(2+) is required as a cofactor.

It is found in the membrane. It catalyses the reaction O-phospho-L-seryl-[protein] + H2O = L-seryl-[protein] + phosphate. The catalysed reaction is O-phospho-L-threonyl-[protein] + H2O = L-threonyl-[protein] + phosphate. In terms of biological role, enzyme with a broad specificity. This is Probable protein phosphatase 2C 5 from Paramecium tetraurelia.